The primary structure comprises 274 residues: Uridine-5'-phosphate dioxygenase (274 aa).

The Fe cation site is built by His-103, Asp-105, and His-246.

The cofactor is Fe(2+).

It carries out the reaction UMP + 2-oxoglutarate + O2 = uridine-5'-aldehyde + succinate + phosphate + CO2. Its pathway is antibiotic biosynthesis. Inhibited by several divalent cations, including Zn(2+). In terms of biological role, dioxygenase involved in the biosynthesis of the lipopeptidyl nucleoside antibiotic A-90289. Catalyzes the dephosphorylation and oxidation of UMP to generate uridine-5'-aldehyde, the first intermediate in the biosynthesis of A-90289. This Streptomyces sp protein is Uridine-5'-phosphate dioxygenase.